We begin with the raw amino-acid sequence, 101 residues long: Small ribosomal subunit protein uS14 (101 aa).

Belongs to the universal ribosomal protein uS14 family. Part of the 30S ribosomal subunit. Contacts proteins S3 and S10.

Binds 16S rRNA, required for the assembly of 30S particles and may also be responsible for determining the conformation of the 16S rRNA at the A site. This Nitrosomonas europaea (strain ATCC 19718 / CIP 103999 / KCTC 2705 / NBRC 14298) protein is Small ribosomal subunit protein uS14.